We begin with the raw amino-acid sequence, 479 residues long: Calcium-dependent mitochondrial ATP-magnesium/phosphate carrier protein 3 (479 aa).

Residues 1–208 are Mitochondrial intermembrane-facing; it reads MESSKPKNRN…ISKHVKRSRL (208 aa). EF-hand domains lie at 33–68, 69–104, 105–135, and 136–171; these read EREIRIRSLFDFFDNSNLGFLDYAQIEKGLASLQIP, PEYKYARDLFRVCDANRDGRVDYQEFRRYIDAKELE, LYRIFQAIDVEHNGCILPEELWEALVKAGIE, and IDDEELARFVEHVDKDNNGTITFEEWRDFLLLYPHE. Asp-82, Asn-84, Asp-86, Arg-88, and Glu-93 together coordinate Ca(2+). Positions 149, 151, 153, 155, and 160 each coordinate Ca(2+). 3 Solcar repeats span residues 203–286, 294–381, and 392–475; these read VKRS…LKPM, IGTS…LKDL, and PGPL…MKKN. The helical transmembrane segment at 209–226 threads the bilayer; that stretch reads LLAGGLAGAVSRTATAPL. The Mitochondrial matrix segment spans residues 227-260; the sequence is DRLKVVLQVQRAHAGVLPTIKKIWREDKLMGFFR. A helical transmembrane segment spans residues 261–280; the sequence is GNGLNVMKVAPESAIKFCAY. At 281–303 the chain is on the mitochondrial intermembrane side; sequence EMLKPMIGGEDGDIGTSGRLMAG. Residues 304–317 traverse the membrane as a helical segment; it reads GMAGALAQTAIYPM. The Mitochondrial matrix portion of the chain corresponds to 318–355; sequence DLVKTRLQTCVSEGGKAPKLWKLTKDIWVREGPRAFYK. Residues 356-375 traverse the membrane as a helical segment; it reads GLFPSLLGIVPYAGIDLAAY. The Mitochondrial intermembrane segment spans residues 376–397; sequence ETLKDLSRTYILQDTEPGPLIQ. A helical membrane pass occupies residues 398–415; that stretch reads LSCGMTSGALGASCVYPL. Residues 416–449 lie on the Mitochondrial matrix side of the membrane; that stretch reads QVVRTRMQADSSKTTMKQEFMNTMKGEGLRGFYR. A helical transmembrane segment spans residues 450–469; it reads GLLPNLLKVVPAASITYIVY. At 470 to 479 the chain is on the mitochondrial intermembrane side; sequence EAMKKNMALD.

This sequence belongs to the mitochondrial carrier (TC 2.A.29) family. In terms of tissue distribution, expressed in flowers, leaves, stems, roots and seedlings, mostly in seedlings.

The protein resides in the mitochondrion inner membrane. With respect to regulation, counter-exchange transport activity is saturable and inhibited by pyridoxal-5'-phosphate, EDTA and EGTA. Activated by calcium Ca(2+) and manganese Mn(2+) ions, and slightly by iron Fe(2+) and zinc Zn(2+) ions. Repressed by copper ions Cu(2+) and slightly by magnesium Mg(2+) ions. Magnesium Mg(2+) ions promotes slightly ATP uptake, ATP-Mg(2+) being exchanged with ATP(4-). Functionally, calcium-dependent mitochondrial carrier protein that catalyzes the import of ATP co-transported with metal divalent cations across the mitochondrial inner membrane in exchange for phosphate (Pi). Can transport phosphate, AMP, ADP, ATP, adenosine 5'-phosphosulfate, sulfate and thiosulfate, and, to a lesser extent, other nucleotides. Binds calcium ions Ca(2+). Also mediates calcium uptake. This is Calcium-dependent mitochondrial ATP-magnesium/phosphate carrier protein 3 from Arabidopsis thaliana (Mouse-ear cress).